The sequence spans 193 residues: Putative manganese efflux pump MntP (193 aa).

Transmembrane regions (helical) follow at residues 3–23 (PLSIVLLGFAMSTDAFAAAIG), 37–57 (VRAGLVFGCIEAITPVIGWML), 66–86 (AAFDHWIAFGLLGALGAHMIV), 109–131 (LALAATGFATSIDAMAVGVSLAF), 146–166 (CTLSMVTAGVMLGRALGALIG), and 171–191 (ILGGVILILIGSTILYEHLSG).

It belongs to the MntP (TC 9.B.29) family.

The protein resides in the cell inner membrane. Functionally, probably functions as a manganese efflux pump. The chain is Putative manganese efflux pump MntP from Xanthomonas campestris pv. campestris (strain 8004).